Reading from the N-terminus, the 145-residue chain is UPF0201 protein M164_1168 (145 aa).

The protein belongs to the UPF0201 family.

The chain is UPF0201 protein M164_1168 from Saccharolobus islandicus (strain M.16.4 / Kamchatka #3) (Sulfolobus islandicus).